A 641-amino-acid polypeptide reads, in one-letter code: Calpain-6 (641 aa).

The Calpain catalytic domain occupies L26 to V343. A domain III region spans residues N344 to R495. The C2 domain occupies T498–A621.

It belongs to the peptidase C2 family. Interacts (via domain III) with microtubules. Interacts (via domain II) with ARHGEF2 (via the N-terminal zinc finger).

The protein resides in the cytoplasm. It localises to the perinuclear region. Its subcellular location is the cytoskeleton. The protein localises to the spindle. Functionally, microtubule-stabilizing protein that may be involved in the regulation of microtubule dynamics and cytoskeletal organization. May act as a regulator of RAC1 activity through interaction with ARHGEF2 to control lamellipodial formation and cell mobility. Does not seem to have protease activity as it has lost the active site residues. In Rattus norvegicus (Rat), this protein is Calpain-6 (Capn6).